The following is a 121-amino-acid chain: Replication protein A 14 kDa subunit (121 aa).

Valine 2 carries the N-acetylvaline modification. Glycyl lysine isopeptide (Lys-Gly) (interchain with G-Cter in ubiquitin) cross-links involve residues lysine 23, lysine 39, and lysine 88.

The protein belongs to the replication factor A protein 3 family. In terms of assembly, component of the canonical replication protein A complex (RPA), a heterotrimer composed of RPA1, RPA2 and RPA3. Also a component of the aRPA, the alternative replication protein A complex, a trimeric complex similar to the replication protein A complex/RPA but where RPA1 and RPA3 are associated with RPA4 instead of RPA2. Interacts with BRIP1/FANCJ via the RPA1 subunit; following DNA damage they colocalize in foci in the nucleus. In terms of processing, ubiquitinated by RFWD3 at stalled replication forks in response to DNA damage: ubiquitination by RFWD3 does not lead to degradation by the proteasome and promotes removal of the RPA complex from stalled replication forks, promoting homologous recombination.

The protein resides in the nucleus. Functionally, as part of the heterotrimeric replication protein A complex (RPA/RP-A), binds and stabilizes single-stranded DNA intermediates that form during DNA replication or upon DNA stress. It prevents their reannealing and in parallel, recruits and activates different proteins and complexes involved in DNA metabolism. Thereby, it plays an essential role both in DNA replication and the cellular response to DNA damage. In the cellular response to DNA damage, the RPA complex controls DNA repair and DNA damage checkpoint activation. Through recruitment of ATRIP activates the ATR kinase a master regulator of the DNA damage response. It is required for the recruitment of the DNA double-strand break repair factors RAD51 and RAD52 to chromatin, in response to DNA damage. Also recruits to sites of DNA damage proteins like XPA and XPG that are involved in nucleotide excision repair and is required for this mechanism of DNA repair. Also plays a role in base excision repair (BER), probably through interaction with UNG. RPA stimulates 5'-3' helicase activity of BRIP1/FANCJ. Also recruits SMARCAL1/HARP, which is involved in replication fork restart, to sites of DNA damage. May also play a role in telomere maintenance. RPA3 has its own single-stranded DNA-binding activity and may be responsible for polarity of the binding of the complex to DNA. As part of the alternative replication protein A complex, aRPA, binds single-stranded DNA and probably plays a role in DNA repair. Compared to the RPA2-containing, canonical RPA complex, may not support chromosomal DNA replication and cell cycle progression through S-phase. The aRPA may not promote efficient priming by DNA polymerase alpha but could support DNA synthesis by polymerase delta in presence of PCNA and replication factor C (RFC), the dual incision/excision reaction of nucleotide excision repair and RAD51-dependent strand exchange. This chain is Replication protein A 14 kDa subunit (RPA3), found in Homo sapiens (Human).